We begin with the raw amino-acid sequence, 443 residues long: Phosphoglucosamine mutase (443 aa).

S100 (phosphoserine intermediate) is an active-site residue. Mg(2+) is bound by residues S100, D240, D242, and D244. S100 carries the post-translational modification Phosphoserine.

It belongs to the phosphohexose mutase family. Mg(2+) is required as a cofactor. Post-translationally, activated by phosphorylation.

The catalysed reaction is alpha-D-glucosamine 1-phosphate = D-glucosamine 6-phosphate. Catalyzes the conversion of glucosamine-6-phosphate to glucosamine-1-phosphate. This is Phosphoglucosamine mutase from Carboxydothermus hydrogenoformans (strain ATCC BAA-161 / DSM 6008 / Z-2901).